The following is a 142-amino-acid chain: Putative nickel-responsive regulator (142 aa).

Ni(2+) is bound by residues histidine 77, histidine 88, histidine 90, and cysteine 96.

This sequence belongs to the transcriptional regulatory CopG/NikR family. As to quaternary structure, homotetramer. Ni(2+) serves as cofactor.

Its function is as follows. Transcriptional regulator. The protein is Putative nickel-responsive regulator of Halobacterium salinarum (strain ATCC 700922 / JCM 11081 / NRC-1) (Halobacterium halobium).